The following is a 449-amino-acid chain: Gamma-aminobutyric acid receptor subunit delta (449 aa).

The N-terminal stretch at 1 to 24 (MDVLGWLLLPLLLLCTQPHHGARA) is a signal peptide. Residues 25-251 (MNDIGDYVGS…QLRRNRGVYI (227 aa)) are Extracellular-facing. Residues Asn103 and Asn106 are each glycosylated (N-linked (GlcNAc...) asparagine). Cys164 and Cys178 are oxidised to a cystine. Residues 252-271 (IQSYMPSVLLVAMSWVSFWI) form a helical membrane-spanning segment. Over 272-275 (SQAA) the chain is Cytoplasmic. The chain crosses the membrane as a helical span at residues 276 to 298 (VPARVSLGITTVLTMTTLMVSAR). Over 299–308 (SSLPRASAIK) the chain is Extracellular. The chain crosses the membrane as a helical span at residues 309–331 (ALDVYFWICYVFVFAALVEYAFA). Topologically, residues 332–423 (HFNADYRKKR…SRLKPIDADT (92 aa)) are cytoplasmic. Ser390 carries the phosphoserine modification. The helical transmembrane segment at 424-446 (IDIYARAVFPAAFAAVNIIYWAA) threads the bilayer. At 447–449 (YTM) the chain is on the extracellular side.

The protein belongs to the ligand-gated ion channel (TC 1.A.9) family. Gamma-aminobutyric acid receptor (TC 1.A.9.5) subfamily. GABRD sub-subfamily. In terms of assembly, heteropentamer, formed by a combination of alpha (GABRA1-6), beta (GABRB1-3), gamma (GABRG1-3), delta (GABRD), epsilon (GABRE), rho (GABRR1-3), pi (GABRP) and theta (GABRQ) chains, each subunit exhibiting distinct physiological and pharmacological properties.

The protein resides in the cell membrane. It catalyses the reaction chloride(in) = chloride(out). In terms of biological role, delta subunit of the heteropentameric ligand-gated chloride channel gated by gamma-aminobutyric acid (GABA), a major inhibitory neurotransmitter in the brain. GABA-gated chloride channels, also named GABA(A) receptors (GABAAR), consist of five subunits arranged around a central pore and contain GABA active binding site(s) located at the alpha and beta subunit interface(s). When activated by GABA, GABAARs selectively allow the flow of chloride anions across the cell membrane down their electrochemical gradient. GABAARs containing delta/GABRD subunits are predominantly expressed and located in extrasynaptic or perisynaptic positions on hippocampus and cerebellar granule cells, and contribute to the tonic GABAergic inhibition. GABAAR containing alpha-4-beta-3-delta subunits can simultaneously bind GABA and histamine where histamine binds at the interface of two neighboring beta subunits, which may be involved in the regulation of sleep and wakefulness. The protein is Gamma-aminobutyric acid receptor subunit delta of Mus musculus (Mouse).